The primary structure comprises 331 residues: MNSFISMIRNGYSDTIPVWFMRQAGRYLKEYNEKKGRMTIKEICMDPELIAGISYDPVRILNVDAAIIFSDITIPLEALGYKIEFLPGGPRIINGYIKNHDMKDIIYFEESNFKYKIYDAIKIFKEKYHFPLIGFSGGLITVLSYIIAGGPDSNLNLTKRSMLSDDKFNDYINIIKDMIIKYIRLQVRAGVDAIQIFDSWLGYLSPQTYENYIKGHIEEILSEINVPVIYFSTGTSSIIEKLSRLNVDYISVDWRLDMKLARSMVNKKGLQGNLDPLIAAYNLRYALKETSDIINAAGRSSYIFNLGHGVIPETPVENLKHIVNFVHNFNQ.

Substrate is bound by residues 22 to 26, aspartate 71, tyrosine 145, serine 199, and histidine 308; that span reads RQAGR.

Belongs to the uroporphyrinogen decarboxylase family. As to quaternary structure, homodimer.

The protein resides in the cytoplasm. The catalysed reaction is uroporphyrinogen III + 4 H(+) = coproporphyrinogen III + 4 CO2. It participates in porphyrin-containing compound metabolism; protoporphyrin-IX biosynthesis; coproporphyrinogen-III from 5-aminolevulinate: step 4/4. Functionally, catalyzes the decarboxylation of four acetate groups of uroporphyrinogen-III to yield coproporphyrinogen-III. The protein is Uroporphyrinogen decarboxylase of Picrophilus torridus (strain ATCC 700027 / DSM 9790 / JCM 10055 / NBRC 100828 / KAW 2/3).